We begin with the raw amino-acid sequence, 542 residues long: Chaperonin GroEL 2 (542 aa).

Residues Thr30–Pro33, Lys51, Asp87–Thr91, Gly415, and Asp495 contribute to the ATP site.

Belongs to the chaperonin (HSP60) family. As to quaternary structure, forms a cylinder of 14 subunits composed of two heptameric rings stacked back-to-back. Interacts with the co-chaperonin GroES.

The protein resides in the cytoplasm. The enzyme catalyses ATP + H2O + a folded polypeptide = ADP + phosphate + an unfolded polypeptide.. In terms of biological role, together with its co-chaperonin GroES, plays an essential role in assisting protein folding. The GroEL-GroES system forms a nano-cage that allows encapsulation of the non-native substrate proteins and provides a physical environment optimized to promote and accelerate protein folding. The chain is Chaperonin GroEL 2 from Methylococcus capsulatus (strain ATCC 33009 / NCIMB 11132 / Bath).